The primary structure comprises 117 residues: Large ribosomal subunit protein uL18 (117 aa).

This sequence belongs to the universal ribosomal protein uL18 family. Part of the 50S ribosomal subunit; part of the 5S rRNA/L5/L18/L25 subcomplex. Contacts the 5S and 23S rRNAs.

This is one of the proteins that bind and probably mediate the attachment of the 5S RNA into the large ribosomal subunit, where it forms part of the central protuberance. The polypeptide is Large ribosomal subunit protein uL18 (Pectobacterium atrosepticum (strain SCRI 1043 / ATCC BAA-672) (Erwinia carotovora subsp. atroseptica)).